A 74-amino-acid chain; its full sequence is O-conotoxin GeXXXIA (74 aa).

Residues 1–22 (MKLTCVLIITVLFLTACQLTTA) form the signal peptide. A propeptide spanning residues 23–33 (VTYSRGEHKHR) is cleaved from the precursor.

Belongs to the conotoxin O1 superfamily. In terms of assembly, homodimer; disulfide-linked. Post-translationally, may contain 2 intrachain disulfide bonds and probably one interchain disulfide bond forming the homodimer. The disulfide pairing is not important for activity towards the different nAChR subtypes, since this peptide without disulfide bond or with different disulfide bonds shows the same activity. In terms of tissue distribution, expressed by the venom duct.

It localises to the secreted. In terms of biological role, the activity of this natural homodimer has not been tested due to low abundance. The synthetic linear peptide has been refolded, giving 4 different monomeric isomers (m1 to m4) with 2 disulfide bonds each. All isomers potently inhibit rat alpha-1-beta-1-delta-epsilon/CHRNA1-CHRNB1-CHRND-CHRNE and human alpha-9-alpha-10/CHRNA9-CHRNA10 nicotinic acetylcholine receptors (nAChR). In addition, they show a modest inhibition at human alpha-3-beta-2/CHRNA3-CHRNB2, alpha-3-beta-4/CHRNA3-CHRNB4, alpha-7/CHRNA7, and alpha-4-beta-4/CHRNA4-CHRNB4. The synthetic monomer peptide without disulfide bonds shows a potent activity on alpha-9-alpha-10/CHRNA9 and CHRNA10 (IC(50)=16.2 nM). This linear peptide does not act as a competitive antagonist, or as a channel pore blocker of nAChR. The polypeptide is O-conotoxin GeXXXIA (Conus generalis (General cone)).